Consider the following 477-residue polypeptide: Aspartyl/glutamyl-tRNA(Asn/Gln) amidotransferase subunit B (477 aa).

This sequence belongs to the GatB/GatE family. GatB subfamily. In terms of assembly, heterotrimer of A, B and C subunits.

The catalysed reaction is L-glutamyl-tRNA(Gln) + L-glutamine + ATP + H2O = L-glutaminyl-tRNA(Gln) + L-glutamate + ADP + phosphate + H(+). It catalyses the reaction L-aspartyl-tRNA(Asn) + L-glutamine + ATP + H2O = L-asparaginyl-tRNA(Asn) + L-glutamate + ADP + phosphate + 2 H(+). Allows the formation of correctly charged Asn-tRNA(Asn) or Gln-tRNA(Gln) through the transamidation of misacylated Asp-tRNA(Asn) or Glu-tRNA(Gln) in organisms which lack either or both of asparaginyl-tRNA or glutaminyl-tRNA synthetases. The reaction takes place in the presence of glutamine and ATP through an activated phospho-Asp-tRNA(Asn) or phospho-Glu-tRNA(Gln). The protein is Aspartyl/glutamyl-tRNA(Asn/Gln) amidotransferase subunit B of Legionella pneumophila (strain Corby).